The chain runs to 554 residues: Dihydroxy-acid dehydratase (554 aa).

Residue cysteine 48 participates in [2Fe-2S] cluster binding. Aspartate 80 provides a ligand contact to Mg(2+). Residue cysteine 121 coordinates [2Fe-2S] cluster. Mg(2+) contacts are provided by aspartate 122 and lysine 123. Lysine 123 bears the N6-carboxylysine mark. Cysteine 193 contacts [2Fe-2S] cluster. Glutamate 444 provides a ligand contact to Mg(2+). Serine 470 serves as the catalytic Proton acceptor.

This sequence belongs to the IlvD/Edd family. In terms of assembly, homodimer. [2Fe-2S] cluster serves as cofactor. Requires Mg(2+) as cofactor.

The catalysed reaction is (2R)-2,3-dihydroxy-3-methylbutanoate = 3-methyl-2-oxobutanoate + H2O. The enzyme catalyses (2R,3R)-2,3-dihydroxy-3-methylpentanoate = (S)-3-methyl-2-oxopentanoate + H2O. It functions in the pathway amino-acid biosynthesis; L-isoleucine biosynthesis; L-isoleucine from 2-oxobutanoate: step 3/4. Its pathway is amino-acid biosynthesis; L-valine biosynthesis; L-valine from pyruvate: step 3/4. Functionally, functions in the biosynthesis of branched-chain amino acids. Catalyzes the dehydration of (2R,3R)-2,3-dihydroxy-3-methylpentanoate (2,3-dihydroxy-3-methylvalerate) into 2-oxo-3-methylpentanoate (2-oxo-3-methylvalerate) and of (2R)-2,3-dihydroxy-3-methylbutanoate (2,3-dihydroxyisovalerate) into 2-oxo-3-methylbutanoate (2-oxoisovalerate), the penultimate precursor to L-isoleucine and L-valine, respectively. The chain is Dihydroxy-acid dehydratase from Tremblaya princeps.